Consider the following 328-residue polypeptide: Ribosomal RNA large subunit methyltransferase F (328 aa).

A disordered region spans residues 1 to 31; that stretch reads MTDTRKPPRKKPQRPAKPAAPREKATLHPRN.

It belongs to the methyltransferase superfamily. METTL16/RlmF family.

The protein resides in the cytoplasm. The enzyme catalyses adenosine(1618) in 23S rRNA + S-adenosyl-L-methionine = N(6)-methyladenosine(1618) in 23S rRNA + S-adenosyl-L-homocysteine + H(+). Specifically methylates the adenine in position 1618 of 23S rRNA. The sequence is that of Ribosomal RNA large subunit methyltransferase F from Pseudomonas syringae pv. syringae (strain B728a).